A 286-amino-acid polypeptide reads, in one-letter code: 4-diphosphocytidyl-2-C-methyl-D-erythritol kinase (286 aa).

K13 is an active-site residue. Residue 96-106 participates in ATP binding; it reads PMGGGIGGGSS. D138 is a catalytic residue.

It belongs to the GHMP kinase family. IspE subfamily.

The catalysed reaction is 4-CDP-2-C-methyl-D-erythritol + ATP = 4-CDP-2-C-methyl-D-erythritol 2-phosphate + ADP + H(+). It participates in isoprenoid biosynthesis; isopentenyl diphosphate biosynthesis via DXP pathway; isopentenyl diphosphate from 1-deoxy-D-xylulose 5-phosphate: step 3/6. Functionally, catalyzes the phosphorylation of the position 2 hydroxy group of 4-diphosphocytidyl-2C-methyl-D-erythritol. The polypeptide is 4-diphosphocytidyl-2-C-methyl-D-erythritol kinase (Pseudoalteromonas atlantica (strain T6c / ATCC BAA-1087)).